A 660-amino-acid chain; its full sequence is Bifunctional polymyxin resistance protein ArnA (660 aa).

Residues 1 to 304 (MKTVVFAYHD…MLGLVQGSRL (304 aa)) form a formyltransferase ArnAFT region. (6R)-10-formyltetrahydrofolate is bound at residue 86–88 (HLI). Histidine 104 serves as the catalytic Proton donor; for formyltransferase activity. (6R)-10-formyltetrahydrofolate-binding positions include arginine 114 and 136-140 (VKRAD). The dehydrogenase ArnADH stretch occupies residues 314–660 (RRTRVLILGV…RTVDLTDKPS (347 aa)). Residues aspartate 347 and 368–369 (DI) each bind NAD(+). Residues alanine 393, tyrosine 398, and 432–433 (TS) each bind UDP-alpha-D-glucuronate. Glutamate 434 functions as the Proton acceptor; for decarboxylase activity in the catalytic mechanism. Residues arginine 460, asparagine 492, 526–535 (KLIDGGKQKR), and tyrosine 613 contribute to the UDP-alpha-D-glucuronate site. Arginine 619 (proton donor; for decarboxylase activity) is an active-site residue.

The protein in the N-terminal section; belongs to the Fmt family. UDP-L-Ara4N formyltransferase subfamily. In the C-terminal section; belongs to the NAD(P)-dependent epimerase/dehydratase family. UDP-glucuronic acid decarboxylase subfamily. In terms of assembly, homohexamer, formed by a dimer of trimers.

The catalysed reaction is UDP-alpha-D-glucuronate + NAD(+) = UDP-beta-L-threo-pentopyranos-4-ulose + CO2 + NADH. The enzyme catalyses UDP-4-amino-4-deoxy-beta-L-arabinose + (6R)-10-formyltetrahydrofolate = UDP-4-deoxy-4-formamido-beta-L-arabinose + (6S)-5,6,7,8-tetrahydrofolate + H(+). It participates in nucleotide-sugar biosynthesis; UDP-4-deoxy-4-formamido-beta-L-arabinose biosynthesis; UDP-4-deoxy-4-formamido-beta-L-arabinose from UDP-alpha-D-glucuronate: step 1/3. It functions in the pathway nucleotide-sugar biosynthesis; UDP-4-deoxy-4-formamido-beta-L-arabinose biosynthesis; UDP-4-deoxy-4-formamido-beta-L-arabinose from UDP-alpha-D-glucuronate: step 3/3. The protein operates within bacterial outer membrane biogenesis; lipopolysaccharide biosynthesis. Functionally, bifunctional enzyme that catalyzes the oxidative decarboxylation of UDP-glucuronic acid (UDP-GlcUA) to UDP-4-keto-arabinose (UDP-Ara4O) and the addition of a formyl group to UDP-4-amino-4-deoxy-L-arabinose (UDP-L-Ara4N) to form UDP-L-4-formamido-arabinose (UDP-L-Ara4FN). The modified arabinose is attached to lipid A and is required for resistance to polymyxin and cationic antimicrobial peptides. The protein is Bifunctional polymyxin resistance protein ArnA of Shigella sonnei (strain Ss046).